Consider the following 65-residue polypeptide: DNA gyrase inhibitor YacG (65 aa).

4 residues coordinate Zn(2+): C9, C12, C28, and C32. The disordered stretch occupies residues 43–65 (EEKRIPSQSENSDSDDWSGQPEQ).

This sequence belongs to the DNA gyrase inhibitor YacG family. Interacts with GyrB. It depends on Zn(2+) as a cofactor.

Its function is as follows. Inhibits all the catalytic activities of DNA gyrase by preventing its interaction with DNA. Acts by binding directly to the C-terminal domain of GyrB, which probably disrupts DNA binding by the gyrase. This Photorhabdus laumondii subsp. laumondii (strain DSM 15139 / CIP 105565 / TT01) (Photorhabdus luminescens subsp. laumondii) protein is DNA gyrase inhibitor YacG.